The chain runs to 252 residues: Imidazole glycerol phosphate synthase subunit HisF (252 aa).

Catalysis depends on residues D12 and D131.

The protein belongs to the HisA/HisF family. In terms of assembly, heterodimer of HisH and HisF.

The protein resides in the cytoplasm. It catalyses the reaction 5-[(5-phospho-1-deoxy-D-ribulos-1-ylimino)methylamino]-1-(5-phospho-beta-D-ribosyl)imidazole-4-carboxamide + L-glutamine = D-erythro-1-(imidazol-4-yl)glycerol 3-phosphate + 5-amino-1-(5-phospho-beta-D-ribosyl)imidazole-4-carboxamide + L-glutamate + H(+). The protein operates within amino-acid biosynthesis; L-histidine biosynthesis; L-histidine from 5-phospho-alpha-D-ribose 1-diphosphate: step 5/9. IGPS catalyzes the conversion of PRFAR and glutamine to IGP, AICAR and glutamate. The HisF subunit catalyzes the cyclization activity that produces IGP and AICAR from PRFAR using the ammonia provided by the HisH subunit. This Thermus thermophilus (strain ATCC 27634 / DSM 579 / HB8) protein is Imidazole glycerol phosphate synthase subunit HisF.